The chain runs to 419 residues: LWamide neuropeptides (419 aa).

The signal sequence occupies residues 1 to 27 (MEKEMRNLMLLVLLTVILDNGIGKCNA). The segment at 27-48 (AKSEEDQDGNARNNRIDKNDDN) is disordered. A propeptide spanning residues 28 to 104 (KSEEDQDGNA…ENLDIDSTVQ (77 aa)) is cleaved from the precursor. At W110 the chain carries Tryptophan amide. A propeptide spanning residues 113 to 140 (EADFDNTRAHDSAQISDEKQSGLWVGDA) is cleaved from the precursor. The segment covering 120-132 (RAHDSAQISDEKQ) has biased composition (basic and acidic residues). Positions 120–332 (RAHDSAQISD…PGLWGRQVED (213 aa)) are disordered. Position 146 is a tryptophan amide (W146). Residues 149–150 (DA) constitute a propeptide that is removed on maturation. Position 156 is a tryptophan amide (W156). Residues 159–160 (DA) constitute a propeptide that is removed on maturation. Position 166 is a tryptophan amide (W166). Positions 169-170 (DA) are excised as a propeptide. The residue at position 176 (W176) is a Tryptophan amide. Positions 179–180 (DA) are excised as a propeptide. W186 carries the tryptophan amide modification. A propeptide spanning residues 189-190 (DA) is cleaved from the precursor. Tryptophan amide is present on W196. Positions 199–200 (DA) are excised as a propeptide. W206 carries the post-translational modification Tryptophan amide. A propeptide spanning residues 209–210 (DA) is cleaved from the precursor. Tryptophan amide is present on W216. The propeptide at 218-220 (GDA) is seems to have a sequencing error or a mutation in position 218; Gly instead of Arg. W226 bears the Tryptophan amide mark. Positions 229–230 (DA) are excised as a propeptide. W236 bears the Tryptophan amide mark. Residues 239–240 (DA) constitute a propeptide that is removed on maturation. W246 is subject to Tryptophan amide. The propeptide occupies 249-250 (DA). Tryptophan amide is present on W256. Residues 259–260 (DA) constitute a propeptide that is removed on maturation. Tryptophan amide is present on W266. The propeptide occupies 269–270 (DA). W276 is subject to Tryptophan amide. A propeptide spanning residues 279–280 (DT) is cleaved from the precursor. W286 bears the Tryptophan amide mark. Residues 289–290 (DA) constitute a propeptide that is removed on maturation. Position 296 is a tryptophan amide (W296). Propeptides lie at residues 299–300 (DA) and 309–320 (DNNVIKSRSDDA). Position 326 is a tryptophan amide (W326). A propeptide spanning residues 329-419 (QVEDGPTKIW…RRNNKKNNKF (91 aa)) is cleaved from the precursor.

This sequence belongs to the LWamide neuropeptide family. In terms of tissue distribution, in planula larvae, expressed in a narrow ring of ectodermal neurosensory cells around the widest circumference at the anterior of the larvae. In primary polyps, expression is confined to endodermal cells of the hypostome. In mature polyps, expression is strong in the epidermis from the tentacle level to the base of the polyp and weak in the gastrodermal cells in the apical hypostome.

The protein localises to the secreted. Functionally, LWamide peptides may be involved in induction of metamorphosis. In Hydractinia echinata (Snail fur), this protein is LWamide neuropeptides.